A 780-amino-acid polypeptide reads, in one-letter code: Protein AMEIOTIC 1 (780 aa).

Disordered stretches follow at residues Lys-32–Ser-60 and Ala-237–Ala-327. Residues Asp-50–Ser-60 are compositionally biased toward polar residues. 2 stretches are compositionally biased toward basic and acidic residues: residues Glu-263–Lys-291 and Arg-309–Ala-327. Positions Val-448 to Ser-547 form a coiled coil.

It is found in the nucleus. The protein localises to the chromosome. Functionally, plays a fundamental role in building the proper chromosome structure at the beginning of meiosis in male meiocytes. Required for the transition from leptotene to zygotene in meiocytes. Required for homologous chromosome pairing, and initiation and progression of meiotic recombination. Regulates meiocyte cytoskeleton organization. The protein is Protein AMEIOTIC 1 of Zea mays (Maize).